Consider the following 217-residue polypeptide: tRNA (guanine-N(7)-)-methyltransferase (217 aa).

4 residues coordinate S-adenosyl-L-methionine: E44, D69, D96, and D118. The active site involves D118. K122 serves as a coordination point for substrate. The tract at residues 124-129 (RHEKRR) is interaction with RNA. Substrate contacts are provided by residues D154 and 193 to 196 (TEYE).

This sequence belongs to the class I-like SAM-binding methyltransferase superfamily. TrmB family.

It carries out the reaction guanosine(46) in tRNA + S-adenosyl-L-methionine = N(7)-methylguanosine(46) in tRNA + S-adenosyl-L-homocysteine. Its pathway is tRNA modification; N(7)-methylguanine-tRNA biosynthesis. In terms of biological role, catalyzes the formation of N(7)-methylguanine at position 46 (m7G46) in tRNA. The sequence is that of tRNA (guanine-N(7)-)-methyltransferase from Lactococcus lactis subsp. lactis (strain IL1403) (Streptococcus lactis).